Here is a 265-residue protein sequence, read N- to C-terminus: Hydroxyethylthiazole kinase (265 aa).

M43 serves as a coordination point for substrate. ATP-binding residues include R119 and S165. A192 lines the substrate pocket.

The protein belongs to the Thz kinase family. Requires Mg(2+) as cofactor.

It carries out the reaction 5-(2-hydroxyethyl)-4-methylthiazole + ATP = 4-methyl-5-(2-phosphooxyethyl)-thiazole + ADP + H(+). It functions in the pathway cofactor biosynthesis; thiamine diphosphate biosynthesis; 4-methyl-5-(2-phosphoethyl)-thiazole from 5-(2-hydroxyethyl)-4-methylthiazole: step 1/1. In terms of biological role, catalyzes the phosphorylation of the hydroxyl group of 4-methyl-5-beta-hydroxyethylthiazole (THZ). The protein is Hydroxyethylthiazole kinase of Haemophilus influenzae (strain ATCC 51907 / DSM 11121 / KW20 / Rd).